We begin with the raw amino-acid sequence, 302 residues long: Sulfate adenylyltransferase subunit 2 (302 aa).

The segment at 280–302 (RQGRAIDHDQSGSMELKKRQGYF) is disordered.

Belongs to the PAPS reductase family. CysD subfamily. In terms of assembly, heterodimer composed of CysD, the smaller subunit, and CysN.

It carries out the reaction sulfate + ATP + H(+) = adenosine 5'-phosphosulfate + diphosphate. Its pathway is sulfur metabolism; hydrogen sulfide biosynthesis; sulfite from sulfate: step 1/3. With CysN forms the ATP sulfurylase (ATPS) that catalyzes the adenylation of sulfate producing adenosine 5'-phosphosulfate (APS) and diphosphate, the first enzymatic step in sulfur assimilation pathway. APS synthesis involves the formation of a high-energy phosphoric-sulfuric acid anhydride bond driven by GTP hydrolysis by CysN coupled to ATP hydrolysis by CysD. The polypeptide is Sulfate adenylyltransferase subunit 2 (Vibrio atlanticus (strain LGP32) (Vibrio splendidus (strain Mel32))).